The chain runs to 108 residues: MNDIIKKIQNQIQNNPIIIYMKGSPDAPSCGFSAQAVHAISSCGKKFAYIDVLKNPDIRLELPKYANWPTFPQLWVNGELIGGCNIILELFQKGELKKTISICDKLNS.

Residues 5-107 (IKKIQNQIQN…KTISICDKLN (103 aa)) enclose the Glutaredoxin domain. A glutathione-binding site is contributed by Lys22. A [2Fe-2S] cluster-binding site is contributed by Cys30. Glutathione contacts are provided by residues Arg59, Phe71, and 84–85 (CN).

The protein belongs to the glutaredoxin family. Monothiol subfamily. Homodimer.

The protein localises to the cytoplasm. In terms of biological role, monothiol glutaredoxin involved in the biogenesis of iron-sulfur clusters. This chain is Glutaredoxin 4 (grxD), found in Buchnera aphidicola subsp. Baizongia pistaciae (strain Bp).